The following is a 1258-amino-acid chain: Regulator of G-protein signaling 22 (1258 aa).

The disordered stretch occupies residues 581 to 604 (QQLGRSEPLNAVSSKDGGLEKGSK). RGS domains are found at residues 845–973 (TFTD…ASRQ) and 1014–1138 (AFRK…TDEK). Positions 1145 to 1172 (RRQEHKQKRKASDTEEDKAGKSGVKQYA) are disordered. Over residues 1154–1164 (KASDTEEDKAG) the composition is skewed to basic and acidic residues.

As to quaternary structure, interacts with GNA11, GNA12 and GNA13. As to expression, expressed testis, including in Leydig cells and spermatogenic cells from the spermatogonia to spermatid stages (at protein level).

Its subcellular location is the cytoplasm. The protein localises to the nucleus. Inhibits signal transduction by increasing the GTPase activity of G protein alpha subunits thereby driving them into their inactive GDP-bound form. The polypeptide is Regulator of G-protein signaling 22 (Rgs22) (Mus musculus (Mouse)).